The chain runs to 95 residues: Beta-defensin 132 (95 aa).

The N-terminal stretch at 1–22 (MKFLLLVLAALGFLTQVIPASG) is a signal peptide. 3 disulfides stabilise this stretch: Cys-27–Cys-55, Cys-35–Cys-49, and Cys-39–Cys-56. Residues 72 to 95 (GNHWPSRSRNTQRKNKKQQTTVTP) form a disordered region.

The protein belongs to the beta-defensin family.

The protein localises to the secreted. Its function is as follows. Has antibacterial activity. This chain is Beta-defensin 132 (DEFB132), found in Macaca fascicularis (Crab-eating macaque).